The chain runs to 697 residues: Elongation factor G (697 aa).

The region spanning 10–285 (AKTRNIGIMA…GVIDYLPSPL (276 aa)) is the tr-type G domain. GTP-binding positions include 19–26 (AHIDAGKT), 83–87 (DTPGH), and 137–140 (NKMD).

This sequence belongs to the TRAFAC class translation factor GTPase superfamily. Classic translation factor GTPase family. EF-G/EF-2 subfamily.

Its subcellular location is the cytoplasm. Catalyzes the GTP-dependent ribosomal translocation step during translation elongation. During this step, the ribosome changes from the pre-translocational (PRE) to the post-translocational (POST) state as the newly formed A-site-bound peptidyl-tRNA and P-site-bound deacylated tRNA move to the P and E sites, respectively. Catalyzes the coordinated movement of the two tRNA molecules, the mRNA and conformational changes in the ribosome. This chain is Elongation factor G, found in Lactobacillus acidophilus (strain ATCC 700396 / NCK56 / N2 / NCFM).